Consider the following 633-residue polypeptide: Probable sodium/potassium/calcium exchanger CG1090 (633 aa).

An N-terminal signal peptide occupies residues 1 to 21; that stretch reads MWNMGLLFLIYYCVSIYSAKG. Over 22–111 the chain is Extracellular; sequence DTKDGQVLPL…PLMNKWARQH (90 aa). The helical transmembrane segment at 112 to 132 threads the bilayer; the sequence is GGLILHILVAVFTFFGLAIVC. At 133–157 the chain is on the cytoplasmic side; sequence DEYFVASLDRLCEELKLSPDVAGAT. One copy of the Alpha-1 repeat lies at 153 to 193; that stretch reads VAGATFMAAGSSAPELATVVIGVFFAKDDIGISGVIGSAVF. Residues 158–178 form a helical membrane-spanning segment; sequence FMAAGSSAPELATVVIGVFFA. Residues 179–181 are Extracellular-facing; it reads KDD. The helical transmembrane segment at 182-202 threads the bilayer; the sequence is IGISGVIGSAVFNIMFVISVC. Residues 203–220 are Cytoplasmic-facing; the sequence is ALCSGTVCQLNWWPLVRD. 2 consecutive transmembrane segments (helical) span residues 221-241 and 242-262; these read CFFY…DVIS and CFES…LHFN. The Extracellular portion of the chain corresponds to 263-427; the sequence is TELERWALGL…EPRRDPLLRP (165 aa). Composition is skewed to polar residues over residues 298–310, 320–333, and 395–405; these read YTQE…QGQK, AKPQ…SDPN, and QVVSTQATSAG. A disordered region spans residues 298 to 422; the sequence is YTQESVGQTQ…TDKQREPRRD (125 aa). The segment covering 411–422 has biased composition (basic and acidic residues); it reads KSTDKQREPRRD. The helical transmembrane segment at 428–448 threads the bilayer; sequence MEGGLPALVSWYVVYPIHFLC. Residues 449–468 lie on the Cytoplasmic side of the membrane; sequence KKTMPDCRQEQYRNWYPFTF. The chain crosses the membrane as a helical span at residues 469–489; it reads LMSMVWISFYSYFMVWMITVI. Topologically, residues 490–500 are extracellular; it reads GSTLAIPDTVM. The helical transmembrane segment at 501–521 threads the bilayer; it reads GLTFVAAGVSVPDALSSIAVI. The Alpha-2 repeat unit spans residues 506–537; sequence AAGVSVPDALSSIAVIKEGFGDMAVSNAIGSN. Over 522 to 535 the chain is Cytoplasmic; the sequence is KEGFGDMAVSNAIG. Residues 536–556 form a helical membrane-spanning segment; sequence SNVFDILVCLGLPWFIQTAII. The Extracellular portion of the chain corresponds to 557–568; the sequence is KPGSHVNVISKG. A helical membrane pass occupies residues 569–589; sequence LAYSTLSLFSTVVFLILSTHL. The Cytoplasmic portion of the chain corresponds to 590–597; that stretch reads NGWKLDKR. A helical transmembrane segment spans residues 598 to 618; sequence LGIILMVWYLFFITLASLYEL. Residues 619–633 are Extracellular-facing; the sequence is NVFGYMNPPECPSTY.

The protein belongs to the Ca(2+):cation antiporter (CaCA) (TC 2.A.19) family. SLC24A subfamily.

The protein resides in the membrane. May function in the removal and maintenance of calcium homeostasis. Transports one Ca(2+) and 1 K(+) in exchange for 4 Na(+). The protein is Probable sodium/potassium/calcium exchanger CG1090 of Drosophila melanogaster (Fruit fly).